Reading from the N-terminus, the 243-residue chain is Adenosylcobinamide-GDP ribazoletransferase (243 aa).

5 helical membrane passes run 31–51, 61–81, 109–129, 134–154, and 188–208; these read LLWY…AHLL, AAII…DGLA, IAVV…LSLL, GIYL…LLAT, and LLLG…FVWL.

Belongs to the CobS family. Requires Mg(2+) as cofactor.

Its subcellular location is the cell inner membrane. It catalyses the reaction alpha-ribazole + adenosylcob(III)inamide-GDP = adenosylcob(III)alamin + GMP + H(+). It carries out the reaction alpha-ribazole 5'-phosphate + adenosylcob(III)inamide-GDP = adenosylcob(III)alamin 5'-phosphate + GMP + H(+). Its pathway is cofactor biosynthesis; adenosylcobalamin biosynthesis; adenosylcobalamin from cob(II)yrinate a,c-diamide: step 7/7. Functionally, joins adenosylcobinamide-GDP and alpha-ribazole to generate adenosylcobalamin (Ado-cobalamin). Also synthesizes adenosylcobalamin 5'-phosphate from adenosylcobinamide-GDP and alpha-ribazole 5'-phosphate. The polypeptide is Adenosylcobinamide-GDP ribazoletransferase (Ectopseudomonas mendocina (strain ymp) (Pseudomonas mendocina)).